The chain runs to 1358 residues: MSYSYAEKKRIRKEFGVLPHILDVPYLLSIQTESYKKFLTADAAKGRLHSGLEIVLKQSFPVESKNGQYELHYVDYQIGEPTFDETECQVRGATYDAPLNVKLRLVVYNKDALPNEKIVEDIREEYVYMGDIPLMTTNGTFIINGTERVVVSQLHRSPGVFFSKDDSEEGAFSARIIPYRGSWLDFEFDSKGIIWARIDRKRKFCATVILKALGYTQEQILENFSETKTITFNSKGFALRLDNLSNMKGELLKFDIVDAQDNVIVKKNKKLTSRDVKKIKDAGVDSVAIDFDLVSTLRVAKDIVNEATGEVIAYANDDVTESLLESCVEVGMLELEVIDFITTERGRYISDTLKYDLTRNTDEALVEIYKVLRPGDPPAAASVKALFEGLFFIESRYSLSDIGRMKLNARLGSDKVSKDIYTLENSDIVGVIEELINIRDGKGKVDDIDHLGNRRVRSVGEMVENQFRIGLYRVEKGIRESMSLVHKDKLMPKDIVNSKPITAAIKEFFTSGALSQFMDQDNPLSEVTHKRRISALGPGGLSRDRAGFEVRDVHATHYGRLCPIETPEGPNIGLINSLASYARVNDYGFLEAPYRKVVDGKVTDEIEYLSAIDEDNYVIAQASTKLDENNHFVEDLIQCRSGGEAIFTESSRVQYMDVSAKQMVSAAAALIPFLEHDDANRVLMGANMQRQAVPTLKSEKPLVGTGMEKIVARDSGNCIIARNAGEVAEVDSNRIVIKVDTEKSQTSNLVDIYSLTKFKRSNKNTCINQRPIVNVGDKVEAGDILADGFATDFGELSLGHNLMVAFMPWNGYNFEDSILLSERIVKDDKYTSIHIEEFTCVARDTKLGPEEITADIPNVSESSLAKLDESGIVHIGANVEAGDILVAKITPKAEQQLTPEERLLRAIFNEKASNVADSSLRMPSGTSGTVINVQVFENDKGGKSKRALKIEKELIDKARKDFDEEFAVIESVVKSSIEQEVVGAKIQKAKGLKKGAILTKEFLATLPFSKWLEISFEDEKLEEKVQNAREYYEEAKIAIDAKFEAKKKSITQSNELSPGVLKTVKVFVAIKKRIQPGDKMAGRHGNKGVVSRVLPVEDMPYMEDGTPVDVCLNPLGIPSRMNIGQILEAHLGLASYGLGKKIEKTLEKTRKAAELRKTLEEVYNSVGDKKVNLEALNDEEILTLCDNLKGGVPIATPVFDGAKEEDIKSLLKIGGFATNGQMKLFDGRTGKPFDRHVTVGYMYMLKLDHLVDDKMHARSTGSYSLVTQQPLGGKAQFGGQRFGEMEVWALQAYGAAYTLREMLTVKSDDIAGRSKMYKNIVDGKLTMNVDVPESFNVLRNEVRALGIDMDFDYSSEEE.

It belongs to the RNA polymerase beta chain family. As to quaternary structure, the RNAP catalytic core consists of 2 alpha, 1 beta, 1 beta' and 1 omega subunit. When a sigma factor is associated with the core the holoenzyme is formed, which can initiate transcription.

It carries out the reaction RNA(n) + a ribonucleoside 5'-triphosphate = RNA(n+1) + diphosphate. Functionally, DNA-dependent RNA polymerase catalyzes the transcription of DNA into RNA using the four ribonucleoside triphosphates as substrates. The protein is DNA-directed RNA polymerase subunit beta of Francisella tularensis subsp. novicida (strain U112).